The chain runs to 313 residues: Solute carrier family 25 member 36 (313 aa).

Solcar repeat units follow at residues 4 to 110 (RDTL…CKEK), 118 to 205 (DSTQ…IKRK), and 226 to 310 (SDFV…VVYL). The next 6 membrane-spanning stretches (helical) occupy residues 7–27 (LVHL…TCPL), 41–57 (LYIS…ASVN), 113–133 (NIFN…AGFT), 182–202 (MSAS…YESI), 228–248 (FVGM…IAYP), and 293–313 (QIPN…LLDG).

The protein belongs to the mitochondrial carrier (TC 2.A.29) family.

It localises to the mitochondrion inner membrane. In terms of biological role, mitochondrial transporter that imports/exports pyrimidine nucleotides into and from mitochondria. Transports preferentially cytosine and uracil (deoxy)nucleoside mono-, di-, and triphosphates by uniport and antiport mechanism. This chain is Solute carrier family 25 member 36 (SLC25A36), found in Gallus gallus (Chicken).